Here is a 388-residue protein sequence, read N- to C-terminus: Probable mannan endo-1,4-beta-mannosidase A-1 (388 aa).

The N-terminal stretch at Met-1 to Ala-20 is a signal peptide. The substrate site is built by Trp-93 and Asn-206. Glu-207 serves as the catalytic Proton donor. N-linked (GlcNAc...) asparagine glycosylation is present at Asn-264. Tyr-282 is a substrate binding site. Glu-315 (nucleophile) is an active-site residue. N-linked (GlcNAc...) asparagine glycosylation occurs at Asn-335. Trp-345 lines the substrate pocket.

The protein belongs to the glycosyl hydrolase 5 (cellulase A) family.

Its subcellular location is the secreted. The enzyme catalyses Random hydrolysis of (1-&gt;4)-beta-D-mannosidic linkages in mannans, galactomannans and glucomannans.. In terms of biological role, endo-1,4-mannanase, a crucial enzyme for depolymerization of seed galactomannans and wood galactoglucomannans. In Aspergillus terreus (strain NIH 2624 / FGSC A1156), this protein is Probable mannan endo-1,4-beta-mannosidase A-1 (manA-1).